Consider the following 420-residue polypeptide: L-rhamnose isomerase (420 aa).

H262, D294, and D296 together coordinate Mn(2+).

The protein belongs to the rhamnose isomerase family. As to quaternary structure, homotetramer. Requires Mn(2+) as cofactor.

The protein resides in the cytoplasm. The catalysed reaction is L-rhamnopyranose = L-rhamnulose. It functions in the pathway carbohydrate degradation; L-rhamnose degradation; glycerone phosphate from L-rhamnose: step 1/3. Catalyzes the interconversion of L-rhamnose and L-rhamnulose. The polypeptide is L-rhamnose isomerase (Pectobacterium carotovorum subsp. carotovorum (strain PC1)).